A 122-amino-acid polypeptide reads, in one-letter code: Ribosome-binding factor A (122 aa).

The protein belongs to the RbfA family. Monomer. Binds 30S ribosomal subunits, but not 50S ribosomal subunits or 70S ribosomes.

The protein localises to the cytoplasm. Its function is as follows. One of several proteins that assist in the late maturation steps of the functional core of the 30S ribosomal subunit. Associates with free 30S ribosomal subunits (but not with 30S subunits that are part of 70S ribosomes or polysomes). Required for efficient processing of 16S rRNA. May interact with the 5'-terminal helix region of 16S rRNA. The chain is Ribosome-binding factor A from Cupriavidus pinatubonensis (strain JMP 134 / LMG 1197) (Cupriavidus necator (strain JMP 134)).